Here is a 234-residue protein sequence, read N- to C-terminus: ATP synthase subunit delta, chloroplastic (234 aa).

Residues 1–47 (MASLQQTLFSLQSKLPPSSFQIARSLPLRKTFPIRINNGGNAAGARM) constitute a chloroplast transit peptide. Ser-48 is modified (N-acetylserine). The N-linked (GlcNAc...) asparagine glycan is linked to Asn-66. The residue at position 234 (Thr-234) is a Phosphothreonine.

It belongs to the ATPase delta chain family. F-type ATPases have 2 components, F(1) - the catalytic core - and F(0) - the membrane proton channel. F(1) has five subunits: alpha(3), beta(3), gamma(1), delta(1), epsilon(1). CF(0) has four main subunits: a(1), b(1), b'(1) and c(10-14). The alpha and beta chains form an alternating ring which encloses part of the gamma chain. F(1) is attached to F(0) by a central stalk formed by the gamma and epsilon chains, while a peripheral stalk is formed by the delta, b and b' chains.

The protein resides in the plastid. The protein localises to the chloroplast thylakoid membrane. Its function is as follows. F(1)F(0) ATP synthase produces ATP from ADP in the presence of a proton or sodium gradient. F-type ATPases consist of two structural domains, F(1) containing the extramembraneous catalytic core and F(0) containing the membrane proton channel, linked together by a central stalk and a peripheral stalk. During catalysis, ATP synthesis in the catalytic domain of F(1) is coupled via a rotary mechanism of the central stalk subunits to proton translocation (Potential). Essential for photosynthesis, probably by facilitating electron transport in both photosystems I and II. This protein is part of the stalk that links CF(0) to CF(1). It either transmits conformational changes from CF(0) to CF(1) or is implicated in proton conduction. This is ATP synthase subunit delta, chloroplastic from Arabidopsis thaliana (Mouse-ear cress).